The following is a 92-amino-acid chain: Small ribosomal subunit protein uS19 (92 aa).

The protein belongs to the universal ribosomal protein uS19 family.

Protein S19 forms a complex with S13 that binds strongly to the 16S ribosomal RNA. This is Small ribosomal subunit protein uS19 from Shewanella halifaxensis (strain HAW-EB4).